Reading from the N-terminus, the 176-residue chain is Ubiquitin-conjugating enzyme E2-20 kDa (176 aa).

A compositionally biased stretch (polar residues) spans 1-20 (MDSDMQNQNPHTNSKNSSSA). Residues 1 to 25 (MDSDMQNQNPHTNSKNSSSAGMAVD) form a disordered region. The 148-residue stretch at 28-175 (SVTKRLRSEL…LMQRYKEIDE (148 aa)) folds into the UBC core domain. The active-site Glycyl thioester intermediate is C113.

It belongs to the ubiquitin-conjugating enzyme family.

The enzyme catalyses S-ubiquitinyl-[E1 ubiquitin-activating enzyme]-L-cysteine + [E2 ubiquitin-conjugating enzyme]-L-cysteine = [E1 ubiquitin-activating enzyme]-L-cysteine + S-ubiquitinyl-[E2 ubiquitin-conjugating enzyme]-L-cysteine.. It participates in protein modification; protein ubiquitination. Catalyzes the covalent attachment of ubiquitin to other proteins. The protein is Ubiquitin-conjugating enzyme E2-20 kDa (ubc11) of Schizosaccharomyces pombe (strain 972 / ATCC 24843) (Fission yeast).